A 138-amino-acid polypeptide reads, in one-letter code: Probable phospholipase A2 homolog 1 (138 aa).

The N-terminal stretch at 1–21 (MPPRSPLLALVFLAAGVLSSA) is a signal peptide. 6 disulfide bridges follow: C29–C56, C33–C62, C38–C109, C49–C69, C68–C93, and C75–C86. Residues Y48, G50, and W53 each coordinate Ca(2+). H72 is an active-site residue. D73 contributes to the Ca(2+) binding site.

The protein belongs to the phospholipase A2 family. Requires Ca(2+) as cofactor.

The protein resides in the secreted. It carries out the reaction a 1,2-diacyl-sn-glycero-3-phosphocholine + H2O = a 1-acyl-sn-glycero-3-phosphocholine + a fatty acid + H(+). PA2 catalyzes the calcium-dependent hydrolysis of the 2-acyl groups in 3-sn-phosphoglycerides. Releases lysophospholipids (LPLs) and free fatty acids (FFAs) from membrane phospholipids in response to hormones and other external stimuli. The polypeptide is Probable phospholipase A2 homolog 1 (PLA2-I) (Oryza sativa subsp. japonica (Rice)).